The sequence spans 401 residues: Nicotinate phosphoribosyltransferase (401 aa).

H221 is modified (phosphohistidine; by autocatalysis).

The protein belongs to the NAPRTase family. Post-translationally, transiently phosphorylated on a His residue during the reaction cycle. Phosphorylation strongly increases the affinity for substrates and increases the rate of nicotinate D-ribonucleotide production. Dephosphorylation regenerates the low-affinity form of the enzyme, leading to product release.

It carries out the reaction nicotinate + 5-phospho-alpha-D-ribose 1-diphosphate + ATP + H2O = nicotinate beta-D-ribonucleotide + ADP + phosphate + diphosphate. The protein operates within cofactor biosynthesis; NAD(+) biosynthesis; nicotinate D-ribonucleotide from nicotinate: step 1/1. Functionally, catalyzes the synthesis of beta-nicotinate D-ribonucleotide from nicotinate and 5-phospho-D-ribose 1-phosphate at the expense of ATP. The sequence is that of Nicotinate phosphoribosyltransferase from Pectobacterium carotovorum subsp. carotovorum (strain PC1).